The sequence spans 150 residues: Transcriptional repressor NrdR (150 aa).

A zinc finger spans residues 3-34; that stretch reads CPFCAFADSKVVDSRPDKEGSTIRRRRECESC. Positions 49-139 constitute an ATP-cone domain; sequence PLVIKKDGRR…VYRSFKDITE (91 aa).

It belongs to the NrdR family. Zn(2+) is required as a cofactor.

Functionally, negatively regulates transcription of bacterial ribonucleotide reductase nrd genes and operons by binding to NrdR-boxes. This is Transcriptional repressor NrdR from Geotalea daltonii (strain DSM 22248 / JCM 15807 / FRC-32) (Geobacter daltonii).